A 380-amino-acid chain; its full sequence is uncharacterized protein (380 aa).

Positions Asn251–Leu275 are disordered. Residues Ser260–Pro272 show a composition bias toward low complexity.

This is an uncharacterized protein from Allium cepa var. aggregatum (Shallot).